A 548-amino-acid chain; its full sequence is MSNKVLMIDGDRISGNEVRAQNVLAVTAIANIVKTSFGPIGLDKMLIDNIGSIVVTNDGATILQKIDIEHPAAKILVQLSELQDQEVGDGTTTVVILAAELLKRANELVARKVHPTVIISGFRLACTEAIKYINETLAVKVETLPKDFIVNIAKTSMSSKTINDDSDFFSKIVIEAITRVKTIDYKGDVKYPINAINILKAHGKSAKESTLVEGYALNCTVASEGMPKRIQGAKIAFLDFNLAKTKMKLGQKVVVTNVNDLEAIRDRENDIVKERISLIIKSGANVVLTTKGIDDLCLKYFVEAGCMAVRRCKKEDLKRIAKSCGGTVLITLANLEGEESFDTTALGIADEVVQDRLADDELIIVKNSNKKSASIILRGANELMLDEMERSIHDSLCIVKRTLESGTIVPGGGAVESALSIYLDNIAATMGSRKQLAISEFAESLLVVPKQLAVNAALDASDLVSKLKAYHHAAQTDPSKKSYAYSGLDLFNNKVRNNLEAGVLEPAIAKIKCIKFATESAITILRIDDKITLNPREQQGGDHEGHGH.

Belongs to the TCP-1 chaperonin family. Heterooligomeric complex of about 850 to 900 kDa that forms two stacked rings, 12 to 16 nm in diameter.

Its subcellular location is the cytoplasm. In terms of biological role, molecular chaperone; assists the folding of proteins upon ATP hydrolysis. Known to play a role, in vitro, in the folding of actin and tubulin. In Dictyostelium discoideum (Social amoeba), this protein is T-complex protein 1 subunit alpha (tcp1).